Consider the following 320-residue polypeptide: Aspartate carbamoyltransferase catalytic subunit (320 aa).

The carbamoyl phosphate site is built by arginine 58 and threonine 59. Lysine 86 serves as a coordination point for L-aspartate. The carbamoyl phosphate site is built by arginine 108, histidine 136, and glutamine 139. L-aspartate-binding residues include arginine 169 and arginine 223. Residues glycine 264 and proline 265 each contribute to the carbamoyl phosphate site.

It belongs to the aspartate/ornithine carbamoyltransferase superfamily. ATCase family. As to quaternary structure, heterododecamer (2C3:3R2) of six catalytic PyrB chains organized as two trimers (C3), and six regulatory PyrI chains organized as three dimers (R2).

It carries out the reaction carbamoyl phosphate + L-aspartate = N-carbamoyl-L-aspartate + phosphate + H(+). It functions in the pathway pyrimidine metabolism; UMP biosynthesis via de novo pathway; (S)-dihydroorotate from bicarbonate: step 2/3. In terms of biological role, catalyzes the condensation of carbamoyl phosphate and aspartate to form carbamoyl aspartate and inorganic phosphate, the committed step in the de novo pyrimidine nucleotide biosynthesis pathway. In Cereibacter sphaeroides (strain ATCC 17025 / ATH 2.4.3) (Rhodobacter sphaeroides), this protein is Aspartate carbamoyltransferase catalytic subunit.